The primary structure comprises 350 residues: 3-dehydroquinate synthase (350 aa).

Residues 106 to 110 (GVVGD), 130 to 131 (TS), Lys143, and Lys152 each bind NAD(+). Positions 185, 246, and 263 each coordinate Zn(2+).

The protein belongs to the sugar phosphate cyclases superfamily. Dehydroquinate synthase family. The cofactor is NAD(+). Co(2+) is required as a cofactor. Zn(2+) serves as cofactor.

Its subcellular location is the cytoplasm. It carries out the reaction 7-phospho-2-dehydro-3-deoxy-D-arabino-heptonate = 3-dehydroquinate + phosphate. Its pathway is metabolic intermediate biosynthesis; chorismate biosynthesis; chorismate from D-erythrose 4-phosphate and phosphoenolpyruvate: step 2/7. Its function is as follows. Catalyzes the conversion of 3-deoxy-D-arabino-heptulosonate 7-phosphate (DAHP) to dehydroquinate (DHQ). This is 3-dehydroquinate synthase from Clostridium perfringens (strain 13 / Type A).